The following is a 332-amino-acid chain: NADH-quinone oxidoreductase subunit H (332 aa).

9 helical membrane-spanning segments follow: residues 4–24 (FAFFALETLIKCIIIIAIFAS), 44–64 (IGPDMVGPFGLIQLVADMIKL), 78–98 (FIFAIAPLISAICAFVSLAAI), 120–140 (VALLFVIGTSGLCFYAVFLGG), 165–185 (VGALALIAIIMLVGSFSLVDI), 194–214 (FSWLIFKQPLAFVLFIIALFI), 255–275 (IAGAILVTLLFLGGFNSFWII), 279–299 (IMMIVKSSFIFFWYFWARAAF), and 312–332 (YLILIPLAVLNLLITALTVLL).

The protein belongs to the complex I subunit 1 family. In terms of assembly, NDH-1 is composed of 14 different subunits. Subunits NuoA, H, J, K, L, M, N constitute the membrane sector of the complex.

It localises to the cell inner membrane. The enzyme catalyses a quinone + NADH + 5 H(+)(in) = a quinol + NAD(+) + 4 H(+)(out). Its function is as follows. NDH-1 shuttles electrons from NADH, via FMN and iron-sulfur (Fe-S) centers, to quinones in the respiratory chain. The immediate electron acceptor for the enzyme in this species is believed to be ubiquinone. Couples the redox reaction to proton translocation (for every two electrons transferred, four hydrogen ions are translocated across the cytoplasmic membrane), and thus conserves the redox energy in a proton gradient. This subunit may bind ubiquinone. The protein is NADH-quinone oxidoreductase subunit H of Campylobacter jejuni subsp. jejuni serotype O:23/36 (strain 81-176).